A 405-amino-acid chain; its full sequence is Glucose-1-phosphate adenylyltransferase 1 (405 aa).

Residues tyrosine 96, glycine 161, 176–177 (EK), and serine 194 contribute to the alpha-D-glucose 1-phosphate site.

The protein belongs to the bacterial/plant glucose-1-phosphate adenylyltransferase family. Homotetramer.

It carries out the reaction alpha-D-glucose 1-phosphate + ATP + H(+) = ADP-alpha-D-glucose + diphosphate. The protein operates within glycan biosynthesis; glycogen biosynthesis. In terms of biological role, involved in the biosynthesis of ADP-glucose, a building block required for the elongation reactions to produce glycogen. Catalyzes the reaction between ATP and alpha-D-glucose 1-phosphate (G1P) to produce pyrophosphate and ADP-Glc. The protein is Glucose-1-phosphate adenylyltransferase 1 of Vibrio cholerae serotype O1 (strain ATCC 39315 / El Tor Inaba N16961).